Consider the following 382-residue polypeptide: Pyrimidine monooxygenase RutA (382 aa).

FMN-binding positions include 68–69, Asn-134, Glu-143, 159–160, and Ser-209; these read IK and RY.

It belongs to the NtaA/SnaA/DszA monooxygenase family. RutA subfamily.

It carries out the reaction uracil + FMNH2 + NADH + O2 = (Z)-3-ureidoacrylate + FMN + NAD(+) + H2O + H(+). It catalyses the reaction thymine + FMNH2 + NADH + O2 = (Z)-2-methylureidoacrylate + FMN + NAD(+) + H2O + H(+). Its function is as follows. Catalyzes the pyrimidine ring opening between N-3 and C-4 by an unusual flavin hydroperoxide-catalyzed mechanism, adding oxygen atoms in the process to yield ureidoacrylate peracid, that immediately reacts with FMN forming ureidoacrylate and FMN-N(5)-oxide. The FMN-N(5)-oxide reacts spontaneously with NADH to produce FMN. Requires the flavin reductase RutF to regenerate FMN in vivo. The polypeptide is Pyrimidine monooxygenase RutA (Escherichia coli (strain K12 / MC4100 / BW2952)).